A 229-amino-acid chain; its full sequence is MGDKIWLPFPVLLLAALPPVLLPGAAGFTPSLDSDFTFTLPAGQKECFYQPMPLKASLEIEYQVLDGAGLDIDFHLASPEGKTLVFEQRKSDGVHTVETEVGDYMFCFDNTFSTISEKVIFFELILDNMGEQAQEQEDWKKYITGTDILDMKLEDILESINSIKSRLSKSGHIQTLLRAFEARDRNIQESNFDRVNFWSMVNLVVMVVVSAIQVYMLKSLFEDKRKSRT.

An N-terminal signal peptide occupies residues Met-1–Gly-27. Topologically, residues Phe-28–Asn-196 are lumenal. Residues Lys-45–Leu-126 enclose the GOLD domain. Residues Phe-197–Leu-217 form a helical membrane-spanning segment. The Cytoplasmic portion of the chain corresponds to Lys-218–Thr-229.

Belongs to the EMP24/GP25L family. In terms of assembly, interacts with TMED9 and TMED10.

It is found in the endoplasmic reticulum membrane. The protein localises to the golgi apparatus. It localises to the cis-Golgi network membrane. The protein resides in the endoplasmic reticulum-Golgi intermediate compartment membrane. Functionally, potential role in vesicular protein trafficking, mainly in the early secretory pathway. Required for the maintenance of the Golgi apparatus; involved in protein exchange between Golgi stacks during assembly. Probably not required for COPI-vesicle-mediated retrograde transport. This Homo sapiens (Human) protein is Transmembrane emp24 domain-containing protein 5 (TMED5).